Reading from the N-terminus, the 429-residue chain is Adenylosuccinate synthetase (429 aa).

Residues 12-18 and 40-42 contribute to the GTP site; these read GDEGKGK and GHT. The active-site Proton acceptor is the Asp13. Mg(2+)-binding residues include Asp13 and Gly40. Residues 13–16, 38–41, Thr129, Arg143, Gln223, Thr238, and Arg302 contribute to the IMP site; these read DEGK and NAGH. Catalysis depends on His41, which acts as the Proton donor. 298–304 contributes to the substrate binding site; sequence VVTGRKR. Residues Arg304, 330 to 332, and 412 to 414 contribute to the GTP site; these read KLD and STS.

It belongs to the adenylosuccinate synthetase family. Homodimer. It depends on Mg(2+) as a cofactor.

The protein resides in the cytoplasm. The enzyme catalyses IMP + L-aspartate + GTP = N(6)-(1,2-dicarboxyethyl)-AMP + GDP + phosphate + 2 H(+). It participates in purine metabolism; AMP biosynthesis via de novo pathway; AMP from IMP: step 1/2. Plays an important role in the de novo pathway of purine nucleotide biosynthesis. Catalyzes the first committed step in the biosynthesis of AMP from IMP. This is Adenylosuccinate synthetase from Bartonella bacilliformis (strain ATCC 35685 / KC583 / Herrer 020/F12,63).